Consider the following 361-residue polypeptide: DNA replication and repair protein RecF (361 aa).

Residue 30-37 participates in ATP binding; it reads GDNAQGKT.

It belongs to the RecF family.

Its subcellular location is the cytoplasm. In terms of biological role, the RecF protein is involved in DNA metabolism; it is required for DNA replication and normal SOS inducibility. RecF binds preferentially to single-stranded, linear DNA. It also seems to bind ATP. The chain is DNA replication and repair protein RecF from Clostridium perfringens (strain ATCC 13124 / DSM 756 / JCM 1290 / NCIMB 6125 / NCTC 8237 / Type A).